A 647-amino-acid chain; its full sequence is Threonine--tRNA ligase (647 aa).

The region spanning 1–63 is the TGS domain; sequence MDKINITFPD…EEDGSIEIVT (63 aa). The catalytic stretch occupies residues 242-540; sequence DHRKIGKELD…LTEETKGAFP (299 aa). Zn(2+) contacts are provided by Cys336, His387, and His517.

This sequence belongs to the class-II aminoacyl-tRNA synthetase family. Homodimer. Zn(2+) is required as a cofactor.

The protein resides in the cytoplasm. It catalyses the reaction tRNA(Thr) + L-threonine + ATP = L-threonyl-tRNA(Thr) + AMP + diphosphate + H(+). In terms of biological role, catalyzes the attachment of threonine to tRNA(Thr) in a two-step reaction: L-threonine is first activated by ATP to form Thr-AMP and then transferred to the acceptor end of tRNA(Thr). Also edits incorrectly charged L-seryl-tRNA(Thr). This is Threonine--tRNA ligase from Staphylococcus carnosus (strain TM300).